The sequence spans 123 residues: Phosphoribosyl-AMP cyclohydrolase (123 aa).

A Mg(2+)-binding site is contributed by Asp-81. Cys-82 serves as a coordination point for Zn(2+). Mg(2+) is bound by residues Asp-83 and Asp-85. Residues Cys-98 and Cys-105 each contribute to the Zn(2+) site.

Belongs to the PRA-CH family. In terms of assembly, homodimer. Mg(2+) is required as a cofactor. Zn(2+) serves as cofactor.

It localises to the cytoplasm. It catalyses the reaction 1-(5-phospho-beta-D-ribosyl)-5'-AMP + H2O = 1-(5-phospho-beta-D-ribosyl)-5-[(5-phospho-beta-D-ribosylamino)methylideneamino]imidazole-4-carboxamide. It functions in the pathway amino-acid biosynthesis; L-histidine biosynthesis; L-histidine from 5-phospho-alpha-D-ribose 1-diphosphate: step 3/9. Catalyzes the hydrolysis of the adenine ring of phosphoribosyl-AMP. The chain is Phosphoribosyl-AMP cyclohydrolase from Nocardioides sp. (strain ATCC BAA-499 / JS614).